We begin with the raw amino-acid sequence, 82 residues long: M-zodatoxin-Lt3a (82 aa).

The signal sequence occupies residues 1 to 22; that stretch reads MKTYAVLLALVVAFVCIAESTG. A propeptide spanning residues 23–61 is cleaved from the precursor; sequence YPVEDLEDDELTELEAEALLEDLLEDLELEDLDYNEEAR. The Processing quadruplet motif motif lies at 58–61; that stretch reads EEAR. Position 81 is an alanine amide (alanine 81).

This sequence belongs to the cationic peptide 03 (latarcin) family. 03 subfamily. Post-translationally, cleavage of the propeptide depends on the processing quadruplet motif (XXXR, with at least one of X being E). As to expression, expressed by the venom gland.

It is found in the secreted. Its subcellular location is the target cell membrane. In terms of biological role, it has antimicrobial activity against Gram-positive bacteria (A.globiformis VKM Ac-1112 (MIC=0.3 uM), and B.subtilis VKM B-501 (MIC=1.2 uM)), Gram-negative bacteria (E.coli DH5-alpha (MIC=2.5 uM), E.coli MH1 (MIC=6.0 uM), and P.aeruginosa PAO1 (MIC&gt;40 uM)), and yeasts (P.pastoris GS115 (MIC=20 uM), and S.cerevisiae Y190 (MIC=20 uM)). Causes paralysis, but is not lethal when injected into insect (M.domestica) larvae. A second study reports antibacterial activity against E.coli (MIC=100 uM) and S.aureus (MIC=84 uM). Furthermore, increases efficacy of antibiotics (chloramphenicol, streptomycin, kanamycin, novobiocin) when tested against E.coli, probably by facilitating their incorporation into the bacteria. In Lachesana tarabaevi (Spider), this protein is M-zodatoxin-Lt3a.